Consider the following 577-residue polypeptide: Proline--tRNA ligase (577 aa).

Belongs to the class-II aminoacyl-tRNA synthetase family. ProS type 1 subfamily. In terms of assembly, homodimer.

Its subcellular location is the cytoplasm. It carries out the reaction tRNA(Pro) + L-proline + ATP = L-prolyl-tRNA(Pro) + AMP + diphosphate. Its function is as follows. Catalyzes the attachment of proline to tRNA(Pro) in a two-step reaction: proline is first activated by ATP to form Pro-AMP and then transferred to the acceptor end of tRNA(Pro). As ProRS can inadvertently accommodate and process non-cognate amino acids such as alanine and cysteine, to avoid such errors it has two additional distinct editing activities against alanine. One activity is designated as 'pretransfer' editing and involves the tRNA(Pro)-independent hydrolysis of activated Ala-AMP. The other activity is designated 'posttransfer' editing and involves deacylation of mischarged Ala-tRNA(Pro). The misacylated Cys-tRNA(Pro) is not edited by ProRS. In Helicobacter pylori (strain G27), this protein is Proline--tRNA ligase.